Reading from the N-terminus, the 697-residue chain is Phosphatase and actin regulator 4-B (697 aa).

The RPEL 1 repeat unit spans residues 42–67 (EVLERKISMRKPREELVKRGLIVDVP). Disordered stretches follow at residues 63 to 381 (IVDV…LTLA) and 450 to 569 (LKVP…SKDE). A compositionally biased stretch (basic and acidic residues) spans 189–202 (HVPEKTSEKYRPKS). Composition is skewed to pro residues over residues 317-326 (PSPPLPPKRA) and 370-380 (APNPPVPPLTL). Composition is skewed to acidic residues over residues 454–469 (DDDDDEDELSLEDESL), 501–514 (QEEDEEEGVSDTDS), and 522–532 (EEDEDEEEEET). 2 RPEL repeats span residues 579–604 (TQLNRRLSQRPTAEELEQRNILQKNE) and 616–641 (RRLTRKLSQRPTVAELLERKILRFNE).

Belongs to the phosphatase and actin regulator family. In terms of assembly, binds ppp1ca and actin.

Its subcellular location is the cytoplasm. It is found in the cell projection. The protein localises to the lamellipodium. Its function is as follows. Regulator of protein phosphatase 1 (PP1) required for neural tube and optic fissure closure, and enteric neural crest cell (ENCCs) migration during development. Acts as an activator of PP1. During neural tube closure, localizes to the ventral neural tube and activates PP1, leading to down-regulate cell proliferation within cranial neural tissue and the neural retina. Also acts as a regulator of migration of enteric neural crest cells (ENCCs) by activating PP1, leading to repression of the integrin signaling through the rho/rock pathway. This Xenopus laevis (African clawed frog) protein is Phosphatase and actin regulator 4-B (phactr4-b).